A 374-amino-acid polypeptide reads, in one-letter code: Eukaryotic translation initiation factor 3 subunit M (374 aa).

Residue Ser-2 is modified to N-acetylserine. Residues Ser-2 and Ser-152 each carry the phosphoserine modification. The PCI domain maps to 180–339; it reads AASKVMVELL…RKVVVSHSTH (160 aa). At Lys-254 the chain carries N6-acetyllysine. Phosphoserine is present on Ser-367.

It belongs to the eIF-3 subunit M family. As to quaternary structure, component of the eukaryotic translation initiation factor 3 (eIF-3) complex, which is composed of 13 subunits: EIF3A, EIF3B, EIF3C, EIF3D, EIF3E, EIF3F, EIF3G, EIF3H, EIF3I, EIF3J, EIF3K, EIF3L and EIF3M. The eIF-3 complex appears to include 3 stable modules: module A is composed of EIF3A, EIF3B, EIF3G and EIF3I; module B is composed of EIF3F, EIF3H, and EIF3M; and module C is composed of EIF3C, EIF3D, EIF3E, EIF3K and EIF3L. EIF3C of module C binds EIF3B of module A and EIF3H of module B, thereby linking the three modules. EIF3J is a labile subunit that binds to the eIF-3 complex via EIF3B. The eIF-3 complex interacts with RPS6KB1 under conditions of nutrient depletion. Mitogenic stimulation leads to binding and activation of a complex composed of MTOR and RPTOR, leading to phosphorylation and release of RPS6KB1 and binding of EIF4B to eIF-3.

The protein resides in the cytoplasm. In terms of biological role, component of the eukaryotic translation initiation factor 3 (eIF-3) complex, which is required for several steps in the initiation of protein synthesis. The eIF-3 complex associates with the 40S ribosome and facilitates the recruitment of eIF-1, eIF-1A, eIF-2:GTP:methionyl-tRNAi and eIF-5 to form the 43S pre-initiation complex (43S PIC). The eIF-3 complex stimulates mRNA recruitment to the 43S PIC and scanning of the mRNA for AUG recognition. The eIF-3 complex is also required for disassembly and recycling of post-termination ribosomal complexes and subsequently prevents premature joining of the 40S and 60S ribosomal subunits prior to initiation. The eIF-3 complex specifically targets and initiates translation of a subset of mRNAs involved in cell proliferation, including cell cycling, differentiation and apoptosis, and uses different modes of RNA stem-loop binding to exert either translational activation or repression. The sequence is that of Eukaryotic translation initiation factor 3 subunit M from Pongo abelii (Sumatran orangutan).